The primary structure comprises 341 residues: Cyclic GMP-AMP synthase-like receptor (341 aa).

Residues S64 and 77–79 (EFD) contribute to the ATP site. Mg(2+)-binding residues include E77, D79, and D172. D172 is a GTP binding site. Residues K230 and 246–250 (SYHIK) contribute to the ATP site. Position 258 (E258) interacts with Mn(2+).

Belongs to the mab-21 family. The cofactor is Mg(2+). Mn(2+) serves as cofactor.

It carries out the reaction GTP + ATP = 2',3'-cGAMP + 2 diphosphate. The enzyme catalyses GTP + ATP = pppGp(2'-5')A + diphosphate. The catalysed reaction is pppGp(2'-5')A = 2',3'-cGAMP + diphosphate. In terms of biological role, nucleotidyltransferase that catalyzes the formation of cyclic GMP-AMP (2',3'-cGAMP) from ATP and GTP and plays a key role in innate immunity. Acts as a key sensor of double-stranded RNA (dsRNA), the presence of dsRNA in the cytoplasm being a danger signal that triggers the immune responses. Directly binds dsRNA, activating the nucleotidyltransferase activity, leading to synthesis of 2',3'-cGAMP, a second messenger that binds to and activates Sting, thereby triggering the immune response via activation of the NF-kappa-B transcription factor. In Hydra vulgaris (Hydra), this protein is Cyclic GMP-AMP synthase-like receptor.